Reading from the N-terminus, the 148-residue chain is Large ribosomal subunit protein uL15 (148 aa).

Residues 1–28 (MIRRRKKVRKLRGSHTHGWGCKKKHRGG) show a composition bias toward basic residues. The tract at residues 1 to 43 (MIRRRKKVRKLRGSHTHGWGCKKKHRGGGSKGGRGMAGTGKRK) is disordered. Positions 29–38 (GSKGGRGMAG) are enriched in gly residues.

This sequence belongs to the universal ribosomal protein uL15 family. Part of the 50S ribosomal subunit.

Its function is as follows. Binds to the 23S rRNA. The protein is Large ribosomal subunit protein uL15 of Thermococcus kodakarensis (strain ATCC BAA-918 / JCM 12380 / KOD1) (Pyrococcus kodakaraensis (strain KOD1)).